We begin with the raw amino-acid sequence, 89 residues long: Small ribosomal subunit protein uS17 (89 aa).

Belongs to the universal ribosomal protein uS17 family. Part of the 30S ribosomal subunit.

Its function is as follows. One of the primary rRNA binding proteins, it binds specifically to the 5'-end of 16S ribosomal RNA. The chain is Small ribosomal subunit protein uS17 from Baumannia cicadellinicola subsp. Homalodisca coagulata.